The chain runs to 92 residues: Small ribosomal subunit protein uS19 (92 aa).

Belongs to the universal ribosomal protein uS19 family.

Its function is as follows. Protein S19 forms a complex with S13 that binds strongly to the 16S ribosomal RNA. This chain is Small ribosomal subunit protein uS19, found in Rhizobium etli (strain CIAT 652).